Reading from the N-terminus, the 130-residue chain is Ribosome-binding factor A (130 aa).

The segment at 111–130 (RDLDDVGPGATSSDEDAEQR) is disordered.

This sequence belongs to the RbfA family. In terms of assembly, monomer. Binds 30S ribosomal subunits, but not 50S ribosomal subunits or 70S ribosomes.

Its subcellular location is the cytoplasm. One of several proteins that assist in the late maturation steps of the functional core of the 30S ribosomal subunit. Associates with free 30S ribosomal subunits (but not with 30S subunits that are part of 70S ribosomes or polysomes). Required for efficient processing of 16S rRNA. May interact with the 5'-terminal helix region of 16S rRNA. The sequence is that of Ribosome-binding factor A from Xanthomonas oryzae pv. oryzae (strain MAFF 311018).